The sequence spans 202 residues: Dephospho-CoA kinase (202 aa).

Residues 4–201 (VIGLTGGIAS…QKYLAMSKQN (198 aa)) form the DPCK domain. 12 to 17 (ASGKTT) is a binding site for ATP.

This sequence belongs to the CoaE family.

Its subcellular location is the cytoplasm. It catalyses the reaction 3'-dephospho-CoA + ATP = ADP + CoA + H(+). It participates in cofactor biosynthesis; coenzyme A biosynthesis; CoA from (R)-pantothenate: step 5/5. Its function is as follows. Catalyzes the phosphorylation of the 3'-hydroxyl group of dephosphocoenzyme A to form coenzyme A. The polypeptide is Dephospho-CoA kinase (Vibrio vulnificus (strain YJ016)).